The chain runs to 230 residues: Endonuclease NucS (230 aa).

Belongs to the NucS endonuclease family.

It localises to the cytoplasm. Functionally, cleaves both 3' and 5' ssDNA extremities of branched DNA structures. This chain is Endonuclease NucS, found in Corynebacterium efficiens (strain DSM 44549 / YS-314 / AJ 12310 / JCM 11189 / NBRC 100395).